Here is a 382-residue protein sequence, read N- to C-terminus: Dual-specificity RNA methyltransferase RlmN (382 aa).

Glu-91 (proton acceptor) is an active-site residue. Positions 97–339 (ETDRGTLCIS…TTVRKTRGDD (243 aa)) constitute a Radical SAM core domain. Cys-104 and Cys-344 are joined by a disulfide. The [4Fe-4S] cluster site is built by Cys-111, Cys-115, and Cys-118. Residues 165-166 (GE), Ser-197, 219-221 (SLH), and Asn-301 contribute to the S-adenosyl-L-methionine site. Cys-344 functions as the S-methylcysteine intermediate in the catalytic mechanism.

This sequence belongs to the radical SAM superfamily. RlmN family. Requires [4Fe-4S] cluster as cofactor.

The protein resides in the cytoplasm. The catalysed reaction is adenosine(2503) in 23S rRNA + 2 reduced [2Fe-2S]-[ferredoxin] + 2 S-adenosyl-L-methionine = 2-methyladenosine(2503) in 23S rRNA + 5'-deoxyadenosine + L-methionine + 2 oxidized [2Fe-2S]-[ferredoxin] + S-adenosyl-L-homocysteine. It catalyses the reaction adenosine(37) in tRNA + 2 reduced [2Fe-2S]-[ferredoxin] + 2 S-adenosyl-L-methionine = 2-methyladenosine(37) in tRNA + 5'-deoxyadenosine + L-methionine + 2 oxidized [2Fe-2S]-[ferredoxin] + S-adenosyl-L-homocysteine. In terms of biological role, specifically methylates position 2 of adenine 2503 in 23S rRNA and position 2 of adenine 37 in tRNAs. m2A2503 modification seems to play a crucial role in the proofreading step occurring at the peptidyl transferase center and thus would serve to optimize ribosomal fidelity. The protein is Dual-specificity RNA methyltransferase RlmN of Polaromonas naphthalenivorans (strain CJ2).